Here is a 767-residue protein sequence, read N- to C-terminus: Photosystem I P700 chlorophyll a apoprotein A1 (767 aa).

The segment at 1–22 (MTISPPESGEKDKKILESPVKA) is disordered. Residues 8-22 (SGEKDKKILESPVKA) are compositionally biased toward basic and acidic residues. The next 8 helical transmembrane spans lie at 76-99 (IFSAHFGHLAVIFIWMSAAFFHGA), 162-185 (LMALAIGAVVMAALMLHAGIFHYH), 201-225 (LNHHIAGLVGLGSLAWAGHCIHIGA), 309-327 (VSHHHLAFGVIAIIGGHMY), 368-391 (RHAQLSVNLAMLGSLSILISHHMY), 407-433 (LGLFTHHMWIGGLFIVGAGAHAGIAMV), 455-477 (ALISHLNWVCMWLGFHSFGLYIH), and 558-576 (LMIHHIHAFQIHVTVLILL). The [4Fe-4S] cluster site is built by cysteine 600 and cysteine 609. 2 helical membrane-spanning segments follow: residues 616–637 (HVFLGLFWMYNCLSIVIFHFSW) and 681–703 (ISMYGLMFLGAHFIWAFSLMFLF). Residue histidine 692 coordinates divinylchlorophyll a'. Residues methionine 700 and tyrosine 708 each contribute to the divinyl chlorophyll a site. Residue tryptophan 709 coordinates phylloquinone. Residues 741 to 761 (AVGVTHFLVGGIATTWAFFHA) form a helical membrane-spanning segment.

Belongs to the PsaA/PsaB family. In terms of assembly, the PsaA/B heterodimer binds the P700 divinyl chlorophyll special pair and subsequent electron acceptors. PSI consists of a core antenna complex that captures photons, and an electron transfer chain that converts photonic excitation into a charge separation. The cyanobacterial PSI reaction center is composed of one copy each of PsaA,B,C,D,E,F,I,J,K,L,M and X, and forms trimeric complexes. PSI electron transfer chain: 5 divinyl chlorophyll a, 1 divinyl chlorophyll a', 2 phylloquinones and 3 4Fe-4S clusters. PSI core antenna: 90 divinyl chlorophyll a, 22 carotenoids, 3 phospholipids and 1 galactolipid. P700 is a divinyl chlorophyll a/divinyl chlorophyll a' dimer, A0 is one or more divinyl chlorophyll a, A1 is one or both phylloquinones and FX is a shared 4Fe-4S iron-sulfur center. serves as cofactor.

The protein resides in the cellular thylakoid membrane. It catalyses the reaction reduced [plastocyanin] + hnu + oxidized [2Fe-2S]-[ferredoxin] = oxidized [plastocyanin] + reduced [2Fe-2S]-[ferredoxin]. PsaA and PsaB bind P700, the primary electron donor of photosystem I (PSI), as well as the electron acceptors A0, A1 and FX. PSI is a plastocyanin/cytochrome c6-ferredoxin oxidoreductase, converting photonic excitation into a charge separation, which transfers an electron from the donor P700 chlorophyll pair to the spectroscopically characterized acceptors A0, A1, FX, FA and FB in turn. Oxidized P700 is reduced on the lumenal side of the thylakoid membrane by plastocyanin or cytochrome c6. This is Photosystem I P700 chlorophyll a apoprotein A1 from Prochlorococcus marinus subsp. pastoris (strain CCMP1986 / NIES-2087 / MED4).